Reading from the N-terminus, the 175-residue chain is Probable tail fiber assembly protein (175 aa).

Belongs to the tfa family.

Its function is as follows. Acts catalytically in the formation of tail protein dimers. In Escherichia phage P2 (Bacteriophage P2), this protein is Probable tail fiber assembly protein (G).